Consider the following 32-residue polypeptide: Photosystem II reaction center protein T (32 aa).

The helical transmembrane segment at A3–F23 threads the bilayer.

The protein belongs to the PsbT family. PSII is composed of 1 copy each of membrane proteins PsbA, PsbB, PsbC, PsbD, PsbE, PsbF, PsbH, PsbI, PsbJ, PsbK, PsbL, PsbM, PsbT, PsbY, PsbZ, Psb30/Ycf12, at least 3 peripheral proteins of the oxygen-evolving complex and a large number of cofactors. It forms dimeric complexes.

The protein resides in the plastid. The protein localises to the chloroplast thylakoid membrane. Functionally, found at the monomer-monomer interface of the photosystem II (PS II) dimer, plays a role in assembly and dimerization of PSII. PSII is a light-driven water plastoquinone oxidoreductase, using light energy to abstract electrons from H(2)O, generating a proton gradient subsequently used for ATP formation. The sequence is that of Photosystem II reaction center protein T from Cyanidioschyzon merolae (strain NIES-3377 / 10D) (Unicellular red alga).